Consider the following 485-residue polypeptide: Glycogen synthase (485 aa).

An ADP-alpha-D-glucose-binding site is contributed by K15.

It belongs to the glycosyltransferase 1 family. Bacterial/plant glycogen synthase subfamily.

It carries out the reaction [(1-&gt;4)-alpha-D-glucosyl](n) + ADP-alpha-D-glucose = [(1-&gt;4)-alpha-D-glucosyl](n+1) + ADP + H(+). The protein operates within glycan biosynthesis; glycogen biosynthesis. Functionally, synthesizes alpha-1,4-glucan chains using ADP-glucose. The polypeptide is Glycogen synthase (Fervidobacterium nodosum (strain ATCC 35602 / DSM 5306 / Rt17-B1)).